We begin with the raw amino-acid sequence, 162 residues long: NADH-quinone oxidoreductase subunit I (162 aa).

4Fe-4S ferredoxin-type domains lie at 52-82 (LRRYPNGEERCIACKLCEAICPAQAITIEAG) and 93-122 (TRYDIDMVKCIYCGMCQEACPVDAIVEGPN). 8 residues coordinate [4Fe-4S] cluster: Cys62, Cys65, Cys68, Cys72, Cys102, Cys105, Cys108, and Cys112.

It belongs to the complex I 23 kDa subunit family. NDH-1 is composed of 14 different subunits. Subunits NuoA, H, J, K, L, M, N constitute the membrane sector of the complex. [4Fe-4S] cluster serves as cofactor.

Its subcellular location is the cell inner membrane. It catalyses the reaction a quinone + NADH + 5 H(+)(in) = a quinol + NAD(+) + 4 H(+)(out). Its function is as follows. NDH-1 shuttles electrons from NADH, via FMN and iron-sulfur (Fe-S) centers, to quinones in the respiratory chain. The immediate electron acceptor for the enzyme in this species is believed to be ubiquinone. Couples the redox reaction to proton translocation (for every two electrons transferred, four hydrogen ions are translocated across the cytoplasmic membrane), and thus conserves the redox energy in a proton gradient. In Methylorubrum extorquens (strain PA1) (Methylobacterium extorquens), this protein is NADH-quinone oxidoreductase subunit I.